Reading from the N-terminus, the 71-residue chain is Large ribosomal subunit protein uL29 (71 aa).

It belongs to the universal ribosomal protein uL29 family.

This Rickettsia typhi (strain ATCC VR-144 / Wilmington) protein is Large ribosomal subunit protein uL29.